Consider the following 475-residue polypeptide: Aspartic proteinase 39 (475 aa).

A signal peptide spans 1–23; it reads MELRRKLCIVVAVFVIVIEFASA. Positions 74–422 constitute a Peptidase A1 domain; that stretch reads YFTKIKLGSP…DLDNEVIGWA (349 aa). Asp-92 is an active-site residue. Asn-124 and Asn-222 each carry an N-linked (GlcNAc...) asparagine glycan. Asp-303 is an active-site residue. 2 N-linked (GlcNAc...) asparagine glycosylation sites follow: Asn-425 and Asn-446. Ser-449 carries the GPI-anchor amidated serine lipid modification. Positions 450–475 are cleaved as a propeptide — removed in mature form; the sequence is APRLLMITKLLTILSPLIVMAFTSLA.

This sequence belongs to the peptidase A1 family. As to expression, highly expressed in pollen and pollen tubes. Mostly expressed in inflorescence, flowers and siliques, and barely in leaves and seedlings.

It localises to the cell membrane. Its subcellular location is the cytoplasm. The protein localises to the cytosol. In terms of biological role, displays aspartic proteolytic activity. Together with A36, contributes to pollen and ovule development, including the apical cell wall constitution of the growing pollen tubes. The protein is Aspartic proteinase 39 of Arabidopsis thaliana (Mouse-ear cress).